A 214-amino-acid polypeptide reads, in one-letter code: Inner membrane-spanning protein YciB (214 aa).

The next 5 membrane-spanning stretches (helical) occupy residues 11 to 31 (ILFF…VAII), 50 to 70 (MHII…ILQD), 81 to 101 (VNWG…KPII), 119 to 139 (LSYM…YVAY), and 149 to 169 (FKLF…GVYI).

This sequence belongs to the YciB family.

The protein localises to the cell inner membrane. Plays a role in cell envelope biogenesis, maintenance of cell envelope integrity and membrane homeostasis. This is Inner membrane-spanning protein YciB from Hydrogenovibrio crunogenus (strain DSM 25203 / XCL-2) (Thiomicrospira crunogena).